A 532-amino-acid chain; its full sequence is Cocaine esterase (532 aa).

Gln1 is subject to Pyrrolidone carboxylic acid. Residues Cys69 and Cys96 are joined by a disulfide bond. The Acyl-ester intermediate role is filled by Ser201. N-linked (GlcNAc...) asparagine glycosylation is present at Asn249. Cys253 and Cys264 form a disulfide bridge. Active-site charge relay system residues include Glu318 and His430. Residues 529 to 532 carry the Prevents secretion from ER motif; the sequence is HTEL.

Belongs to the type-B carboxylesterase/lipase family. As to quaternary structure, monomer.

The protein resides in the endoplasmic reticulum lumen. The catalysed reaction is a carboxylic ester + H2O = an alcohol + a carboxylate + H(+). It carries out the reaction cocaine + H2O = ecgonine methyl ester + benzoate + H(+). The enzyme catalyses 2-(5Z,8Z,11Z,14Z-eicosatetraenoyl)-glycerol + H2O = glycerol + (5Z,8Z,11Z,14Z)-eicosatetraenoate + H(+). It catalyses the reaction prostaglandin E2 1-glyceryl ester + H2O = prostaglandin E2 + glycerol + H(+). The catalysed reaction is prostaglandin F2alpha 1-glyceryl ester + H2O = prostaglandin F2alpha + glycerol + H(+). Involved in the detoxification of xenobiotics and in the activation of ester and amide prodrugs. Converts monoacylglycerides to free fatty acids and glycerol. Hydrolyzes of 2-arachidonoylglycerol and prostaglandins. The sequence is that of Cocaine esterase (CES2) from Oryctolagus cuniculus (Rabbit).